A 466-amino-acid polypeptide reads, in one-letter code: Cysteine--tRNA ligase (466 aa).

Cys-29 serves as a coordination point for Zn(2+). A 'HIGH' region motif is present at residues 31 to 41 (ATVQAAPHIGH). The Zn(2+) site is built by Cys-208, His-233, and Glu-237. A 'KMSKS' region motif is present at residues 264–268 (KMSKS). Lys-267 provides a ligand contact to ATP.

Belongs to the class-I aminoacyl-tRNA synthetase family. As to quaternary structure, monomer. Zn(2+) serves as cofactor.

Its subcellular location is the cytoplasm. It catalyses the reaction tRNA(Cys) + L-cysteine + ATP = L-cysteinyl-tRNA(Cys) + AMP + diphosphate. The protein is Cysteine--tRNA ligase of Streptomyces griseus subsp. griseus (strain JCM 4626 / CBS 651.72 / NBRC 13350 / KCC S-0626 / ISP 5235).